The sequence spans 298 residues: Cyclin-dependent kinase 1 (298 aa).

An N-acetylserine modification is found at S2. Positions 8–295 constitute a Protein kinase domain; that stretch reads YKRLEKVGEG…ARRAAIHPYF (288 aa). ATP contacts are provided by residues 14-22 and K40; that span reads VGEGTYGVV. At Y19 the chain carries Phosphotyrosine. Catalysis depends on D136, which acts as the Proton acceptor. T169 bears the Phosphothreonine mark.

The protein belongs to the protein kinase superfamily. CMGC Ser/Thr protein kinase family. CDC2/CDKX subfamily. Forms a stable but non-covalent complex with the CKS1 protein and with a cyclin.

The catalysed reaction is L-seryl-[protein] + ATP = O-phospho-L-seryl-[protein] + ADP + H(+). It carries out the reaction L-threonyl-[protein] + ATP = O-phospho-L-threonyl-[protein] + ADP + H(+). With respect to regulation, phosphorylation at Thr-18 or Tyr-19 inactivates the enzyme, while phosphorylation at Thr-169 activates it. Its function is as follows. Cyclin-dependent kinase that acts as a master regulator of the mitotic and meiotic cell cycles. Required to drive the G1-S transition. More than 200 substrates have been identified. Substrate specificity is in part regulated by the bound cyclin protein. Phosphorylates YTA7 during S-phase to promote transcription of histones. May phosphorylate CNN1, to contribute to the enrichment of CNN1 on anaphase kinetochores. The chain is Cyclin-dependent kinase 1 from Saccharomyces cerevisiae (strain ATCC 204508 / S288c) (Baker's yeast).